Consider the following 548-residue polypeptide: Chaperonin GroEL (548 aa).

Residues 30 to 33, lysine 51, 87 to 91, glycine 415, 479 to 481, and aspartate 495 contribute to the ATP site; these read TLGP, DGTTT, and NAA.

This sequence belongs to the chaperonin (HSP60) family. As to quaternary structure, forms a cylinder of 14 subunits composed of two heptameric rings stacked back-to-back. Interacts with the co-chaperonin GroES.

The protein localises to the cytoplasm. It catalyses the reaction ATP + H2O + a folded polypeptide = ADP + phosphate + an unfolded polypeptide.. Functionally, together with its co-chaperonin GroES, plays an essential role in assisting protein folding. The GroEL-GroES system forms a nano-cage that allows encapsulation of the non-native substrate proteins and provides a physical environment optimized to promote and accelerate protein folding. The chain is Chaperonin GroEL from Sodalis glossinidius (strain morsitans).